We begin with the raw amino-acid sequence, 307 residues long: UDP-N-acetylenolpyruvoylglucosamine reductase (307 aa).

Residues 34–198 (TGGNADFYLS…LEAAFTLEPG (165 aa)) enclose the FAD-binding PCMH-type domain. Arg-177 is an active-site residue. The active-site Proton donor is Ser-227. Residue Glu-297 is part of the active site.

Belongs to the MurB family. FAD serves as cofactor.

The protein resides in the cytoplasm. It carries out the reaction UDP-N-acetyl-alpha-D-muramate + NADP(+) = UDP-N-acetyl-3-O-(1-carboxyvinyl)-alpha-D-glucosamine + NADPH + H(+). It functions in the pathway cell wall biogenesis; peptidoglycan biosynthesis. Cell wall formation. This chain is UDP-N-acetylenolpyruvoylglucosamine reductase, found in Staphylococcus haemolyticus (strain JCSC1435).